The chain runs to 935 residues: Formin-I (935 aa).

A coiled-coil region spans residues 35 to 76 (QQQQQQQQQQINNENENSINNQENKENNNKDNNNNNNKEIKQ). 3 disordered regions span residues 52 to 78 (SINN…KQSS), 380 to 511 (LSSA…QLTP), and 561 to 590 (KEKM…QSLS). Low complexity predominate over residues 384 to 407 (KKQPQQQPQKDVTSSSSSSSNSSS). Polar residues predominate over residues 418–428 (ITTNDSSSSNP). Basic and acidic residues predominate over residues 431–443 (DFDKLSLSSDDKV). The segment covering 444-454 (NNNNVQIENTT) has biased composition (polar residues). The region spanning 444-505 (NNNNVQIENT…KPNNSGGGGG (62 aa)) is the FH1 domain. A compositionally biased stretch (pro residues) spans 456-482 (SVPPPPPVGAPPPPPPPPPPPPPPPPS). The span at 484–499 (LKLNRNRISTPKKPNN) shows a compositional bias: polar residues. An FH2 domain is found at 506–935 (GGQLTPLQKK…SLNLSTLNSK (430 aa)). Residues 568 to 583 (NLNNSNNNNNNNSNNN) are compositionally biased toward low complexity. Coiled-coil stretches lie at residues 702–730 (SLLD…FIKV) and 803–834 (QSSL…QQLL).

The protein belongs to the formin homology family. Diaphanous subfamily.

Functionally, formins play an important role in the nucleation of actin and the formation of linear actin filaments. The protein is Formin-I (forI) of Dictyostelium discoideum (Social amoeba).